A 920-amino-acid chain; its full sequence is Plasma membrane ATPase (920 aa).

Residues 1 to 11 (MSDERITEKPP) show a composition bias toward basic and acidic residues. The segment at 1-71 (MSDERITEKP…AEEDDGPAAA (71 aa)) is disordered. The Cytoplasmic portion of the chain corresponds to 1–117 (MSDERITEKP…REESENLLVK (117 aa)). Residues 17–50 (SEGEPVPEEEVEEETEEEVPDEQSSEDDDIDGLI) show a composition bias toward acidic residues. A helical transmembrane segment spans residues 118 to 138 (FLMFFIGPIQFVMEAAAVLAA). The Extracellular segment spans residues 139 to 142 (GLED). A helical transmembrane segment spans residues 143–162 (WVDFGVICGLLFLNAGVGFI). The Cytoplasmic segment spans residues 163 to 293 (QEFQAGSIVE…GQGHFTEVLN (131 aa)). The helical transmembrane segment at 294 to 315 (GIGVILLVLVVITLLLIWTACF) threads the bilayer. Residues 316-326 (YRTVRIVPILR) lie on the Extracellular side of the membrane. A helical membrane pass occupies residues 327 to 349 (YTLGITIVGVPVGLPAVVTTTMA). Topologically, residues 350 to 721 (GGAAYLAKKQ…IAILNHSLDI (372 aa)) are cytoplasmic. D380 acts as the 4-aspartylphosphate intermediate in catalysis. Mg(2+) is bound by residues D636 and D640. The chain crosses the membrane as a helical span at residues 722 to 740 (DLIVFIAIFADVATLAIAY). Topologically, residues 741–756 (DNAPFSPSPVKWNLPR) are extracellular. The helical transmembrane segment at 757–776 (LWGMSIMMGIILAAGTWITL) threads the bilayer. The Cytoplasmic portion of the chain corresponds to 777–826 (TTMFLPKGGIIQNFGSIDGILFLEISLTENWLIFITRAVGPFWSSIPSWQ). A helical membrane pass occupies residues 827 to 847 (LAGAVFVVDVVATMFTLFGWW). Topologically, residues 848 to 859 (SQNWTDIVTVVR) are extracellular. Residues 860-876 (IYIWSIGIFCCLGGAYY) form a helical membrane-spanning segment. At 877–920 (LMSESETFDRLMNGKPLKENKSTRSVEDFLASMRRVSTQHEKGN) the chain is on the cytoplasmic side.

Belongs to the cation transport ATPase (P-type) (TC 3.A.3) family. Type IIIA subfamily.

It is found in the cell membrane. It catalyses the reaction ATP + H2O + H(+)(in) = ADP + phosphate + 2 H(+)(out). In terms of biological role, the plasma membrane ATPase of plants and fungi is a hydrogen ion pump. The proton gradient it generates drives the active transport of nutrients by H(+)-symport. The resulting external acidification and/or internal alkinization may mediate growth responses. This Zygosaccharomyces rouxii protein is Plasma membrane ATPase.